A 336-amino-acid chain; its full sequence is Holliday junction branch migration complex subunit RuvB (336 aa).

Residues 4–184 (ADRIISAIAK…FGIVQRLEFY (181 aa)) form a large ATPase domain (RuvB-L) region. ATP is bound by residues isoleucine 23, arginine 24, glycine 65, lysine 68, threonine 69, threonine 70, 131-133 (EDY), arginine 174, tyrosine 184, and arginine 221. A Mg(2+)-binding site is contributed by threonine 69. The small ATPAse domain (RuvB-S) stretch occupies residues 185-255 (SIEDLTSIVM…IAKAALAMLD (71 aa)). A head domain (RuvB-H) region spans residues 258–336 (QAGFDYLDRK…HFGLAKLADK (79 aa)). Residues arginine 294, arginine 313, and arginine 318 each contribute to the DNA site.

It belongs to the RuvB family. In terms of assembly, homohexamer. Forms an RuvA(8)-RuvB(12)-Holliday junction (HJ) complex. HJ DNA is sandwiched between 2 RuvA tetramers; dsDNA enters through RuvA and exits via RuvB. An RuvB hexamer assembles on each DNA strand where it exits the tetramer. Each RuvB hexamer is contacted by two RuvA subunits (via domain III) on 2 adjacent RuvB subunits; this complex drives branch migration. In the full resolvosome a probable DNA-RuvA(4)-RuvB(12)-RuvC(2) complex forms which resolves the HJ.

It is found in the cytoplasm. It carries out the reaction ATP + H2O = ADP + phosphate + H(+). Its function is as follows. The RuvA-RuvB-RuvC complex processes Holliday junction (HJ) DNA during genetic recombination and DNA repair, while the RuvA-RuvB complex plays an important role in the rescue of blocked DNA replication forks via replication fork reversal (RFR). RuvA specifically binds to HJ cruciform DNA, conferring on it an open structure. The RuvB hexamer acts as an ATP-dependent pump, pulling dsDNA into and through the RuvAB complex. RuvB forms 2 homohexamers on either side of HJ DNA bound by 1 or 2 RuvA tetramers; 4 subunits per hexamer contact DNA at a time. Coordinated motions by a converter formed by DNA-disengaged RuvB subunits stimulates ATP hydrolysis and nucleotide exchange. Immobilization of the converter enables RuvB to convert the ATP-contained energy into a lever motion, pulling 2 nucleotides of DNA out of the RuvA tetramer per ATP hydrolyzed, thus driving DNA branch migration. The RuvB motors rotate together with the DNA substrate, which together with the progressing nucleotide cycle form the mechanistic basis for DNA recombination by continuous HJ branch migration. Branch migration allows RuvC to scan DNA until it finds its consensus sequence, where it cleaves and resolves cruciform DNA. This Actinobacillus succinogenes (strain ATCC 55618 / DSM 22257 / CCUG 43843 / 130Z) protein is Holliday junction branch migration complex subunit RuvB.